We begin with the raw amino-acid sequence, 535 residues long: Arginine-containing cyclodipeptide synthase anoA (535 aa).

The interval leucine 93 to serine 114 is disordered. A compositionally biased stretch (basic and acidic residues) spans serine 105–serine 114. The short motif at aspartate 424 to glutamate 428 is the Conserved DDXXE motif element.

Belongs to the arginine-containing cyclodipeptide synthase family.

The enzyme catalyses L-tryptophyl-tRNA(Trp) + L-arginyl-tRNA(Arg) = cyclo(L-arginyl-L-tryptophyl) + tRNA(Trp) + tRNA(Arg) + H(+). The protein operates within secondary metabolite biosynthesis. Its function is as follows. Arginine-containing cyclodipeptide synthase; part of the cluster that mediates the biosynthesis of a highly modified cyclo-arginine-tryptophan dipeptide (cRW). Within the pathway, AnoA acts as the scaffold-generating enzyme and is responsible for formation of the cyclo-Arg-Trp diketopiperazine (cRW) from L-arginyl-tRNA(Arg) + L-tryptophanyl-tRNA(Trp). Additional enzymes from the cluster then further modify the cyclo-Arg-Asp diketopiperazine (cRW) scaffold. The polypeptide is Arginine-containing cyclodipeptide synthase anoA (Aspergillus nomiae (Aspergillus nomius)).